Consider the following 317-residue polypeptide: MKKALLLLNMGGANSLDDVEIFLTNMFNDPYILGIKNKFLRKFVAFMITKGRLKTAKHNYEQIGGKSPLCELTAKLCEKISSLKSEFDAVDFAMNYTSPFVKDVLKKYEKFDEIVLLPLYPHHSQTTITSSLADFKKAKEELKLKAKISLCEPFYDDDTYNKIIISHIREAIKDTDISDVSLIFSAHSLPRKIIEKGDIYEKHINEHVQILSKMLKEQGLNFKDVSLAYQSRLGPVKWLEPSLNEALAKCENKKALIYPLSFCIDNSETIFELVIEYAKLAKELSFSFYKVVECPNFSDEFASFILEKSKNAREFSL.

Fe cation contacts are provided by H187 and E268.

It belongs to the ferrochelatase family.

The protein localises to the cytoplasm. It carries out the reaction heme b + 2 H(+) = protoporphyrin IX + Fe(2+). It functions in the pathway porphyrin-containing compound metabolism; protoheme biosynthesis; protoheme from protoporphyrin-IX: step 1/1. Functionally, catalyzes the ferrous insertion into protoporphyrin IX. This Campylobacter concisus (strain 13826) protein is Ferrochelatase.